The sequence spans 309 residues: Ribosomal RNA small subunit methyltransferase H (309 aa).

S-adenosyl-L-methionine is bound by residues 30–32, Asp50, Phe74, Asp96, and Gln103; that span reads GGH.

This sequence belongs to the methyltransferase superfamily. RsmH family.

The protein localises to the cytoplasm. The enzyme catalyses cytidine(1402) in 16S rRNA + S-adenosyl-L-methionine = N(4)-methylcytidine(1402) in 16S rRNA + S-adenosyl-L-homocysteine + H(+). Functionally, specifically methylates the N4 position of cytidine in position 1402 (C1402) of 16S rRNA. The polypeptide is Ribosomal RNA small subunit methyltransferase H (Wigglesworthia glossinidia brevipalpis).